We begin with the raw amino-acid sequence, 178 residues long: Endoribonuclease YbeY (178 aa).

Zn(2+) is bound by residues histidine 118, histidine 122, and histidine 128. A disordered region spans residues 156-178 (YQQDRQDERDRRLLDKSRYFDEP). Residues 159–178 (DRQDERDRRLLDKSRYFDEP) are compositionally biased toward basic and acidic residues.

Belongs to the endoribonuclease YbeY family. Zn(2+) is required as a cofactor.

It is found in the cytoplasm. In terms of biological role, single strand-specific metallo-endoribonuclease involved in late-stage 70S ribosome quality control and in maturation of the 3' terminus of the 16S rRNA. The protein is Endoribonuclease YbeY of Mycobacterium marinum (strain ATCC BAA-535 / M).